The sequence spans 145 residues: Neuromedin-S (145 aa).

An N-terminal signal peptide occupies residues 1-25; that stretch reads MKYLAQFPSILAIYCFCLLQIPSSG. Propeptides lie at residues 26–64, 65–100, and 101–103; these read FPRP…IYKR, FLFH…ADRR, and MKT. Residue Asn136 is modified to Asparagine amide. A propeptide spanning residues 139 to 145 is cleaved from the precursor; the sequence is NLDFDTW.

This sequence belongs to the NmU family.

The protein localises to the secreted. Functionally, implicated in the regulation of circadian rhythms through autocrine and/or paracrine actions. In Bos taurus (Bovine), this protein is Neuromedin-S (NMS).